We begin with the raw amino-acid sequence, 325 residues long: MDGSNVTSFVVEEPTNISTGRNASVGNAHRQIPIVHWVIMSISPVGFVENGILLWFLCFRMRRNPFTVYITHLSIADISLLFCIFILSIDYALDYELSSGHYYTIVTLSVTFLFGYNTGLYLLTAISVERCLSVLYPIWYRCHRPKYQSALVCALLWALSCLVTTMEYVMCIDREEESHSRNDCRAVIIFIAILSFLVFTPLMLVSSTILVVKIRKNTWASHSSKLYIVIMVTIIIFLIFAMPMRLLYLLYYEYWSTFGNLHHISLLFSTINSSANPFIYFFVGSSKKKRFKESLKVVLTRAFKDEMQPRRQKDNCNTVTVETVV.

The Extracellular segment spans residues 1 to 36 (MDGSNVTSFVVEEPTNISTGRNASVGNAHRQIPIVH). Residues Asn5, Asn16, and Asn22 are each glycosylated (N-linked (GlcNAc...) asparagine). Residues 37–61 (WVIMSISPVGFVENGILLWFLCFRM) form a helical membrane-spanning segment. At 62–65 (RRNP) the chain is on the cytoplasmic side. The chain crosses the membrane as a helical span at residues 66-86 (FTVYITHLSIADISLLFCIFI). Over 87–104 (LSIDYALDYELSSGHYYT) the chain is Extracellular. Residues 105-128 (IVTLSVTFLFGYNTGLYLLTAISV) form a helical membrane-spanning segment. The Cytoplasmic segment spans residues 129 to 149 (ERCLSVLYPIWYRCHRPKYQS). Residues 150-172 (ALVCALLWALSCLVTTMEYVMCI) traverse the membrane as a helical segment. Residues 173-185 (DREEESHSRNDCR) are Extracellular-facing. A helical transmembrane segment spans residues 186–206 (AVIIFIAILSFLVFTPLMLVS). Over 207 to 224 (STILVVKIRKNTWASHSS) the chain is Cytoplasmic. A helical membrane pass occupies residues 225 to 245 (KLYIVIMVTIIIFLIFAMPMR). Topologically, residues 246-263 (LLYLLYYEYWSTFGNLHH) are extracellular. Residues 264–284 (ISLLFSTINSSANPFIYFFVG) form a helical membrane-spanning segment. Topologically, residues 285 to 325 (SSKKKRFKESLKVVLTRAFKDEMQPRRQKDNCNTVTVETVV) are cytoplasmic.

Belongs to the G-protein coupled receptor 1 family. Interacts with AGTR1. Interacts with FLNA (via filamin repeat 21); increases PKA-mediated phosphorylation of FLNA.

The protein resides in the cell membrane. In terms of biological role, receptor for angiotensin 1-7. Acts specifically as a functional antagonist of AGTR1 (angiotensin-2 type 1 receptor), although it up-regulates AGTR1 receptor levels. Positive regulation of AGTR1 levels occurs through activation of the G-proteins GNA11 and GNAQ, and stimulation of the protein kinase C signaling cascade. The antagonist effect on AGTR1 function is probably due to AGTR1 being physically altered by MAS1. The protein is Proto-oncogene Mas (MAS1) of Homo sapiens (Human).